The sequence spans 75 residues: Small ribosomal subunit protein bS18 (75 aa).

It belongs to the bacterial ribosomal protein bS18 family. In terms of assembly, part of the 30S ribosomal subunit. Forms a tight heterodimer with protein bS6.

In terms of biological role, binds as a heterodimer with protein bS6 to the central domain of the 16S rRNA, where it helps stabilize the platform of the 30S subunit. This chain is Small ribosomal subunit protein bS18, found in Buchnera aphidicola subsp. Cinara cedri (strain Cc).